A 1838-amino-acid polypeptide reads, in one-letter code: Type III effector DspE (1838 aa).

Over residues 1-12 the composition is skewed to basic and acidic residues; sequence MELKSLGTEHKA. 6 disordered regions span residues 1–72, 86–163, 182–264, 281–300, 398–418, and 1480–1505; these read MELK…AAHQ, KKFS…PTQQ, MAHP…VATP, LEGT…LKGS, DGKS…KTML, and NLAA…SNNR. The span at 27-46 shows a compositional bias: low complexity; that stretch reads ALQQGSSSSSPQNAAASLAA. The segment covering 91–103 has biased composition (polar residues); the sequence is SAPQGQPGTTHSK. Over residues 110-120 the composition is skewed to basic and acidic residues; sequence LLARDDGETQH. Residues 407-418 are compositionally biased toward polar residues; it reads GSGTQSHNKTML. The span at 1480–1502 shows a compositional bias: low complexity; the sequence is NLAAGSRERSTTSGQFGSTTSAS.

It belongs to the AvrE family. As to quaternary structure, interacts with the chaperone DspF (DspB/F).

It is found in the secreted. It localises to the host cell. Polyamidoamine dendrimers inhibit channel and virulence activities. Its function is as follows. Major virulence factor that may function as a water- and solute-permeable channel dedicated to creating osmotic/water potential perturbation and a water- and nutrient-rich apoplast in which bacteria multiply within the infected plant tissues. Expression in Xenopus oocytes results in inward and outward currents, permeability to water and osmolarity-dependent oocyte swelling and bursting. Functionally, acts as a major cell-death inducer during fire blight, a necrotic disease affecting plants of the rosaceous family, and during hypersensitive response (HR) on non-host plants. Essential for pathogenicity on host plants. Contributes quantitatively and in a strain-dependent fashion to HR elicitation in non-host plants such as tobacco. Induces cell death in leaves of apple, a host plant, and tobacco, a non-host plant. Also triggers necrosis in the widely used model, non-host, N.benthamiana and in yeast. Required for the transient multiplication and survival of E.amylovora in non-host A.thaliana leaves. In A.thaliana, triggers electrolyte leakage, activation of defense pathways, reactive oxygen species (ROS) accumulation and cell death. The toxicity of DspE in A.thaliana is associated with an early repression of de novo protein synthesis. The sequence is that of Type III effector DspE from Erwinia amylovora (Fire blight bacteria).